The primary structure comprises 104 residues: NADH-quinone oxidoreductase subunit K (104 aa).

The next 3 membrane-spanning stretches (helical) occupy residues P7–V27, L31–A51, and V63–L83.

The protein belongs to the complex I subunit 4L family. In terms of assembly, NDH-1 is composed of 14 different subunits. Subunits NuoA, H, J, K, L, M, N constitute the membrane sector of the complex.

It is found in the cell inner membrane. It catalyses the reaction a quinone + NADH + 5 H(+)(in) = a quinol + NAD(+) + 4 H(+)(out). Its function is as follows. NDH-1 shuttles electrons from NADH, via FMN and iron-sulfur (Fe-S) centers, to quinones in the respiratory chain. The immediate electron acceptor for the enzyme in this species is believed to be ubiquinone. Couples the redox reaction to proton translocation (for every two electrons transferred, four hydrogen ions are translocated across the cytoplasmic membrane), and thus conserves the redox energy in a proton gradient. The protein is NADH-quinone oxidoreductase subunit K of Gluconacetobacter diazotrophicus (strain ATCC 49037 / DSM 5601 / CCUG 37298 / CIP 103539 / LMG 7603 / PAl5).